A 415-amino-acid chain; its full sequence is Serine hydroxymethyltransferase (415 aa).

(6S)-5,6,7,8-tetrahydrofolate contacts are provided by residues Leu120 and Gly124–Leu126. At Lys229 the chain carries N6-(pyridoxal phosphate)lysine.

Belongs to the SHMT family. In terms of assembly, homodimer. The cofactor is pyridoxal 5'-phosphate.

It localises to the cytoplasm. The enzyme catalyses (6R)-5,10-methylene-5,6,7,8-tetrahydrofolate + glycine + H2O = (6S)-5,6,7,8-tetrahydrofolate + L-serine. It functions in the pathway one-carbon metabolism; tetrahydrofolate interconversion. Its pathway is amino-acid biosynthesis; glycine biosynthesis; glycine from L-serine: step 1/1. Catalyzes the reversible interconversion of serine and glycine with tetrahydrofolate (THF) serving as the one-carbon carrier. This reaction serves as the major source of one-carbon groups required for the biosynthesis of purines, thymidylate, methionine, and other important biomolecules. Also exhibits THF-independent aldolase activity toward beta-hydroxyamino acids, producing glycine and aldehydes, via a retro-aldol mechanism. The polypeptide is Serine hydroxymethyltransferase (Caldicellulosiruptor bescii (strain ATCC BAA-1888 / DSM 6725 / KCTC 15123 / Z-1320) (Anaerocellum thermophilum)).